Here is a 462-residue protein sequence, read N- to C-terminus: Nitrogenase iron-iron protein beta chain (462 aa).

Residues Cys20, Cys45, Cys104, and Ser143 each coordinate [8Fe-7S] cluster.

The protein belongs to the NifD/NifK/NifE/NifN family. Hexamer of two alpha, two beta, and two delta chains. Requires [8Fe-7S] cluster as cofactor.

It catalyses the reaction N2 + 8 reduced [2Fe-2S]-[ferredoxin] + 16 ATP + 16 H2O = H2 + 8 oxidized [2Fe-2S]-[ferredoxin] + 2 NH4(+) + 16 ADP + 16 phosphate + 6 H(+). Functionally, this iron-iron protein is part of the nitrogenase complex that catalyzes the key enzymatic reactions in nitrogen fixation. Other nitrogenase complexes utilize a molybdenum-iron protein or a vanadium-iron protein. The polypeptide is Nitrogenase iron-iron protein beta chain (anfK) (Azotobacter vinelandii).